The following is a 601-amino-acid chain: Glutamine--fructose-6-phosphate aminotransferase [isomerizing] (601 aa).

C2 (nucleophile; for GATase activity) is an active-site residue. One can recognise a Glutamine amidotransferase type-2 domain in the interval 2 to 218; the sequence is CGIVGYIGYD…DHEIVIVKRD (217 aa). SIS domains follow at residues 284–423 and 453–591; these read IIND…NHGR and IATD…VDKP. K596 acts as the For Fru-6P isomerization activity in catalysis.

As to quaternary structure, homodimer.

It localises to the cytoplasm. It carries out the reaction D-fructose 6-phosphate + L-glutamine = D-glucosamine 6-phosphate + L-glutamate. In terms of biological role, catalyzes the first step in hexosamine metabolism, converting fructose-6P into glucosamine-6P using glutamine as a nitrogen source. The polypeptide is Glutamine--fructose-6-phosphate aminotransferase [isomerizing] (Staphylococcus epidermidis (strain ATCC 35984 / DSM 28319 / BCRC 17069 / CCUG 31568 / BM 3577 / RP62A)).